Here is a 55-residue protein sequence, read N- to C-terminus: Variant surface glycoprotein ETAT 1.2 (55 aa).

An N-linked (GlcNAc...) asparagine glycan is attached at Asn-34. A lipid anchor (GPI-anchor amidated asparagine) is attached at Asn-38. Residues 39 to 55 constitute a propeptide, removed in mature form; the sequence is NSFAIKTSTLLLAVLLF.

It localises to the cell membrane. Its function is as follows. VSG forms a coat on the surface of the parasite. The trypanosome evades the immune response of the host by expressing a series of antigenically distinct VSGs from an estimated 1000 VSG genes. The chain is Variant surface glycoprotein ETAT 1.2 from Trypanosoma brucei rhodesiense.